Consider the following 80-residue polypeptide: Large ribosomal subunit protein bL31 (80 aa).

The protein belongs to the bacterial ribosomal protein bL31 family. Type A subfamily. Part of the 50S ribosomal subunit.

In terms of biological role, binds the 23S rRNA. This chain is Large ribosomal subunit protein bL31, found in Nostoc punctiforme (strain ATCC 29133 / PCC 73102).